Consider the following 548-residue polypeptide: Chaperonin GroEL (548 aa).

ATP contacts are provided by residues T30 to P33, K51, D87 to T91, G415, N479 to A481, and D495.

It belongs to the chaperonin (HSP60) family. In terms of assembly, forms a cylinder of 14 subunits composed of two heptameric rings stacked back-to-back. Interacts with the co-chaperonin GroES.

The protein resides in the cytoplasm. The enzyme catalyses ATP + H2O + a folded polypeptide = ADP + phosphate + an unfolded polypeptide.. Together with its co-chaperonin GroES, plays an essential role in assisting protein folding. The GroEL-GroES system forms a nano-cage that allows encapsulation of the non-native substrate proteins and provides a physical environment optimized to promote and accelerate protein folding. This chain is Chaperonin GroEL, found in Nitratidesulfovibrio vulgaris (strain DSM 19637 / Miyazaki F) (Desulfovibrio vulgaris).